The sequence spans 163 residues: SKP1-like protein 3 (163 aa).

An interaction with the F-box domain of F-box proteins region spans residues L105–E163.

Belongs to the SKP1 family. As to quaternary structure, part of a SCF (SKP1-cullin-F-box) protein ligase complex. Interacts with ADO3/FKF1 and At3g61590. As to expression, highly expressed in siliques.

The protein localises to the nucleus. It functions in the pathway protein modification; protein ubiquitination. Functionally, involved in ubiquitination and subsequent proteasomal degradation of target proteins. Together with CUL1, RBX1 and a F-box protein, it forms a SCF E3 ubiquitin ligase complex. The functional specificity of this complex depends on the type of F-box protein. In the SCF complex, it serves as an adapter that links the F-box protein to CUL1. The polypeptide is SKP1-like protein 3 (ASK3) (Arabidopsis thaliana (Mouse-ear cress)).